The primary structure comprises 214 residues: MNYPHPIIAREGWPFIAIAAVIALLIHAVGGFGFAWPFWLLLVFVVQFFRDPQRPIPAQPNAVLCPADGRIVAVETTQDPYANREALKISVFMNVFNVHSQRSPVDGAVTKVEYFPGAFLNAAIDKASTENERNALVIQTASGKTVTAVQIAGLVARRILCYVRAGEPLSRGQRYGFIRFGSRVDVYLPLGSRAKVSIGEKVYASSTILAELEQ.

The active-site Schiff-base intermediate with substrate; via pyruvic acid is the Ser182. Residue Ser182 is modified to Pyruvic acid (Ser); by autocatalysis.

Belongs to the phosphatidylserine decarboxylase family. PSD-A subfamily. As to quaternary structure, heterodimer of a large membrane-associated beta subunit and a small pyruvoyl-containing alpha subunit. Pyruvate is required as a cofactor. In terms of processing, is synthesized initially as an inactive proenzyme. Formation of the active enzyme involves a self-maturation process in which the active site pyruvoyl group is generated from an internal serine residue via an autocatalytic post-translational modification. Two non-identical subunits are generated from the proenzyme in this reaction, and the pyruvate is formed at the N-terminus of the alpha chain, which is derived from the carboxyl end of the proenzyme. The post-translation cleavage follows an unusual pathway, termed non-hydrolytic serinolysis, in which the side chain hydroxyl group of the serine supplies its oxygen atom to form the C-terminus of the beta chain, while the remainder of the serine residue undergoes an oxidative deamination to produce ammonia and the pyruvoyl prosthetic group on the alpha chain.

Its subcellular location is the cell membrane. It carries out the reaction a 1,2-diacyl-sn-glycero-3-phospho-L-serine + H(+) = a 1,2-diacyl-sn-glycero-3-phosphoethanolamine + CO2. It functions in the pathway phospholipid metabolism; phosphatidylethanolamine biosynthesis; phosphatidylethanolamine from CDP-diacylglycerol: step 2/2. Catalyzes the formation of phosphatidylethanolamine (PtdEtn) from phosphatidylserine (PtdSer). The protein is Phosphatidylserine decarboxylase proenzyme of Burkholderia ambifaria (strain MC40-6).